The sequence spans 223 residues: Phosphoribosylformylglycinamidine synthase subunit PurQ (223 aa).

The Glutamine amidotransferase type-1 domain maps to 4–223 (RIGVITFPGT…FQSVLSTLVS (220 aa)). Residue C87 is the Nucleophile of the active site. Active-site residues include H195 and E197.

Part of the FGAM synthase complex composed of 1 PurL, 1 PurQ and 2 PurS subunits.

The protein localises to the cytoplasm. It carries out the reaction N(2)-formyl-N(1)-(5-phospho-beta-D-ribosyl)glycinamide + L-glutamine + ATP + H2O = 2-formamido-N(1)-(5-O-phospho-beta-D-ribosyl)acetamidine + L-glutamate + ADP + phosphate + H(+). It catalyses the reaction L-glutamine + H2O = L-glutamate + NH4(+). The protein operates within purine metabolism; IMP biosynthesis via de novo pathway; 5-amino-1-(5-phospho-D-ribosyl)imidazole from N(2)-formyl-N(1)-(5-phospho-D-ribosyl)glycinamide: step 1/2. Functionally, part of the phosphoribosylformylglycinamidine synthase complex involved in the purines biosynthetic pathway. Catalyzes the ATP-dependent conversion of formylglycinamide ribonucleotide (FGAR) and glutamine to yield formylglycinamidine ribonucleotide (FGAM) and glutamate. The FGAM synthase complex is composed of three subunits. PurQ produces an ammonia molecule by converting glutamine to glutamate. PurL transfers the ammonia molecule to FGAR to form FGAM in an ATP-dependent manner. PurS interacts with PurQ and PurL and is thought to assist in the transfer of the ammonia molecule from PurQ to PurL. The protein is Phosphoribosylformylglycinamidine synthase subunit PurQ of Corynebacterium jeikeium (strain K411).